A 358-amino-acid polypeptide reads, in one-letter code: Methylthioribose-1-phosphate isomerase (358 aa).

Substrate-binding positions include 54 to 56 (CGA) and Gln205. Catalysis depends on Asp246, which acts as the Proton donor. A substrate-binding site is contributed by 256–257 (NQ).

The protein belongs to the eIF-2B alpha/beta/delta subunits family. MtnA subfamily.

The catalysed reaction is 5-(methylsulfanyl)-alpha-D-ribose 1-phosphate = 5-(methylsulfanyl)-D-ribulose 1-phosphate. Its pathway is amino-acid biosynthesis; L-methionine biosynthesis via salvage pathway; L-methionine from S-methyl-5-thio-alpha-D-ribose 1-phosphate: step 1/6. Its function is as follows. Catalyzes the interconversion of methylthioribose-1-phosphate (MTR-1-P) into methylthioribulose-1-phosphate (MTRu-1-P). This is Methylthioribose-1-phosphate isomerase from Pseudomonas fluorescens (strain ATCC BAA-477 / NRRL B-23932 / Pf-5).